The chain runs to 540 residues: Early growth response protein 1 (540 aa).

Disordered regions lie at residues 1-105 (MAAA…AESF) and 162-240 (VSMT…PAYP). The span at 64–75 (SSGGGGGGGGGS) shows a compositional bias: gly residues. The span at 167–190 (PPATSSSASSPAASSSASQSPPLS) shows a compositional bias: low complexity. Positions 192–201 (AVQSNDSSPI) are enriched in polar residues. Residue K304 forms a Glycyl lysine isopeptide (Lys-Gly) (interchain with G-Cter in SUMO2) linkage. Residues 317–337 (PSRMRKYPNRPSKTPPHERPY) form a disordered region. The segment at 337 to 361 (YACPVESCDRRFSRSDELTRHIRIH) adopts a C2H2-type 1 zinc-finger fold. The segment at 366–388 (PQCRISMRNFSRSDHLTTHIRTH) adopts a C2H2-type 2; degenerate zinc-finger fold. The C2H2-type 3 zinc finger occupies 394 to 416 (FACDICGRKFARSDERKRHTKIH). The segment at 407–482 (DERKRHTKIH…SPGSSTYPSP (76 aa)) is disordered. A compositionally biased stretch (basic residues) spans 411-421 (RHTKIHLRQKD). The segment covering 427-482 (SAASAATSSLPSYPSPVATSYPSPATTSYPSPATTSYPSPVPTSYSSPGSSTYPSP) has biased composition (low complexity).

This sequence belongs to the EGR C2H2-type zinc-finger protein family. Interacts with SNAI1 and SP1 upon 12-O-tetradecanoylphorbol-13-acetate (TPA) induction.

Its subcellular location is the nucleus. The protein resides in the cytoplasm. Transcriptional regulator. Recognizes and binds to the DNA sequence 5'-GCG(T/G)GGGCG-3'(EGR-site) in the promoter region of target genes. Binds double-stranded target DNA, irrespective of the cytosine methylation status. Regulates the transcription of numerous target genes, and thereby plays an important role in regulating the response to growth factors, DNA damage, and ischemia. Plays a role in the regulation of cell survival, proliferation and cell death. Activates expression of p53/TP53 and TGFB1, and thereby helps prevent tumor formation. Required for normal progress through mitosis and normal proliferation of hepatocytes after partial hepatectomy. Mediates responses to ischemia and hypoxia; regulates the expression of proteins such as IL1B and CXCL2 that are involved in inflammatory processes and development of tissue damage after ischemia. Regulates biosynthesis of luteinizing hormone (LHB) in the pituitary. Regulates the amplitude of the expression rhythms of clock genes: BMAL1, PER2 and NR1D1 in the liver via the activation of PER1 (clock repressor) transcription. Regulates the rhythmic expression of core-clock gene BMAL1 in the suprachiasmatic nucleus (SCN). The polypeptide is Early growth response protein 1 (EGR1) (Bos taurus (Bovine)).